Consider the following 564-residue polypeptide: NAD-dependent malic enzyme (564 aa).

Y104 acts as the Proton donor in catalysis. R157 provides a ligand contact to NAD(+). Residue K175 is the Proton acceptor of the active site. 3 residues coordinate a divalent metal cation: E246, D247, and D270. Positions 270 and 417 each coordinate NAD(+).

Belongs to the malic enzymes family. In terms of assembly, homotetramer. Mg(2+) serves as cofactor. Mn(2+) is required as a cofactor.

The catalysed reaction is (S)-malate + NAD(+) = pyruvate + CO2 + NADH. It catalyses the reaction oxaloacetate + H(+) = pyruvate + CO2. The sequence is that of NAD-dependent malic enzyme from Aeromonas salmonicida (strain A449).